The following is a 126-amino-acid chain: Large ribosomal subunit protein bL12 (126 aa).

It belongs to the bacterial ribosomal protein bL12 family. In terms of assembly, homodimer. Part of the ribosomal stalk of the 50S ribosomal subunit. Forms a multimeric L10(L12)X complex, where L10 forms an elongated spine to which 2 to 4 L12 dimers bind in a sequential fashion. Binds GTP-bound translation factors.

In terms of biological role, forms part of the ribosomal stalk which helps the ribosome interact with GTP-bound translation factors. Is thus essential for accurate translation. The protein is Large ribosomal subunit protein bL12 of Prosthecochloris aestuarii (strain DSM 271 / SK 413).